The primary structure comprises 136 residues: Large ribosomal subunit protein uL16 (136 aa).

It belongs to the universal ribosomal protein uL16 family. Part of the 50S ribosomal subunit.

In terms of biological role, binds 23S rRNA and is also seen to make contacts with the A and possibly P site tRNAs. The chain is Large ribosomal subunit protein uL16 from Histophilus somni (strain 129Pt) (Haemophilus somnus).